Here is a 452-residue protein sequence, read N- to C-terminus: Cysteine--tRNA ligase (452 aa).

Cysteine 27 contributes to the Zn(2+) binding site. Residues 29–39 carry the 'HIGH' region motif; that stretch reads PTVQDHFHIGH. Zn(2+) contacts are provided by aspartate 207, histidine 232, and glutamate 236. Positions 265–269 match the 'KMSKS' region motif; it reads KMSKS. Residue lysine 268 participates in ATP binding.

It belongs to the class-I aminoacyl-tRNA synthetase family. Zn(2+) is required as a cofactor.

The protein localises to the cytoplasm. The enzyme catalyses tRNA(Cys) + L-cysteine + ATP = L-cysteinyl-tRNA(Cys) + AMP + diphosphate. The chain is Cysteine--tRNA ligase from Thermoplasma acidophilum (strain ATCC 25905 / DSM 1728 / JCM 9062 / NBRC 15155 / AMRC-C165).